We begin with the raw amino-acid sequence, 608 residues long: Afamin (608 aa).

Residues 1 to 21 (MRHLKLTGFIFFLLPLTESLA) form the signal peptide. 3 consecutive Albumin domains span residues 22–210 (LPTK…APIT), 211–403 (QYLK…KFNE), and 404–599 (TTQR…KTGD). N-linked (GlcNAc...) asparagine glycosylation occurs at asparagine 33. Disulfide bonds link cysteine 77/cysteine 86, cysteine 99/cysteine 114, cysteine 113/cysteine 124, cysteine 148/cysteine 193, cysteine 192/cysteine 201, cysteine 224/cysteine 270, cysteine 269/cysteine 277, cysteine 289/cysteine 303, cysteine 302/cysteine 313, cysteine 340/cysteine 385, and cysteine 384/cysteine 393. N-linked (GlcNAc...) asparagine glycosylation occurs at asparagine 109. N-linked (GlcNAc...) asparagine glycosylation occurs at asparagine 153. Residues 215–319 (ASSSYQRNVC…REACIINANK (105 aa)) form a binding pocket for hydrophobic ligands region. N-linked (GlcNAc...) asparagine glycosylation is present at asparagine 402. Disulfide bonds link cysteine 416–cysteine 462, cysteine 461–cysteine 470, cysteine 483–cysteine 499, cysteine 498–cysteine 509, and cysteine 580–cysteine 589. Asparagine 488 carries N-linked (GlcNAc...) asparagine glycosylation. Residues 583 to 608 (VQEPESCFSPESSKTGDESQATEKQR) form a disordered region. Residues 596–608 (KTGDESQATEKQR) show a composition bias toward basic and acidic residues.

Belongs to the ALB/AFP/VDB family. Forms a 1:1 complex with Wnt family members; interacts with WNT1, WNT2B, WNT3, WNT5A, WNT7A, WNT7B, WNT8, WNT9A, WNT9B, WNT10A and WNT10B. Interacts with WNT3A. In terms of processing, N-glycosylated; more than 90% of the glycans are sialylated. As to expression, detected in brain, especially on brain capillaries (at protein level). Expressed in isolated brain capillaries.

The protein localises to the secreted. In terms of biological role, functions as a carrier for hydrophobic molecules in body fluids. Essential for the solubility and activity of lipidated Wnt family members, including WNT1, WNT2B, WNT3, WNT3A, WNT5A, WNT7A, WNT7B, WNT8, WNT9A, WNT9B, WNT10A and WNT10B. Binds vitamin E. May transport vitamin E in body fluids under conditions where the lipoprotein system is not sufficient. May be involved in the transport of vitamin E across the blood-brain barrier. The chain is Afamin (Afm) from Mus musculus (Mouse).